The following is a 439-amino-acid chain: Glutamate--tRNA ligase 2 (439 aa).

Residues 6–16 (PSPTGDMHIGN) carry the 'HIGH' region motif. The 'KMSKS' region signature appears at 232–236 (KMSKR). K235 contributes to the ATP binding site.

Belongs to the class-I aminoacyl-tRNA synthetase family. Glutamate--tRNA ligase type 1 subfamily. Monomer.

Its subcellular location is the cytoplasm. The catalysed reaction is tRNA(Glu) + L-glutamate + ATP = L-glutamyl-tRNA(Glu) + AMP + diphosphate. Catalyzes the attachment of glutamate to tRNA(Glu) in a two-step reaction: glutamate is first activated by ATP to form Glu-AMP and then transferred to the acceptor end of tRNA(Glu). In Helicobacter pylori (strain HPAG1), this protein is Glutamate--tRNA ligase 2.